A 145-amino-acid chain; its full sequence is Bacilliredoxin GK2368 (145 aa).

It belongs to the bacilliredoxin family.

This chain is Bacilliredoxin GK2368, found in Geobacillus kaustophilus (strain HTA426).